The chain runs to 451 residues: Tubulin alpha-2 chain (451 aa).

GTP-binding residues include Gln-12, Asp-73, Ser-142, Gly-146, Thr-147, Thr-181, Asn-208, and Asn-230. Asp-73 is a binding site for Mg(2+). The active site involves Glu-256.

It belongs to the tubulin family. Dimer of alpha and beta chains. A typical microtubule is a hollow water-filled tube with an outer diameter of 25 nm and an inner diameter of 15 nM. Alpha-beta heterodimers associate head-to-tail to form protofilaments running lengthwise along the microtubule wall with the beta-tubulin subunit facing the microtubule plus end conferring a structural polarity. Microtubules usually have 13 protofilaments but different protofilament numbers can be found in some organisms and specialized cells. It depends on Mg(2+) as a cofactor.

It localises to the cytoplasm. The protein resides in the cytoskeleton. The enzyme catalyses GTP + H2O = GDP + phosphate + H(+). Functionally, tubulin is the major constituent of microtubules, a cylinder consisting of laterally associated linear protofilaments composed of alpha- and beta-tubulin heterodimers. Microtubules grow by the addition of GTP-tubulin dimers to the microtubule end, where a stabilizing cap forms. Below the cap, tubulin dimers are in GDP-bound state, owing to GTPase activity of alpha-tubulin. This Emericella nidulans (strain FGSC A4 / ATCC 38163 / CBS 112.46 / NRRL 194 / M139) (Aspergillus nidulans) protein is Tubulin alpha-2 chain (tubB).